The chain runs to 101 residues: Urease subunit beta (101 aa).

It belongs to the urease beta subunit family. As to quaternary structure, heterotrimer of UreA (gamma), UreB (beta) and UreC (alpha) subunits. Three heterotrimers associate to form the active enzyme.

Its subcellular location is the cytoplasm. It carries out the reaction urea + 2 H2O + H(+) = hydrogencarbonate + 2 NH4(+). The protein operates within nitrogen metabolism; urea degradation; CO(2) and NH(3) from urea (urease route): step 1/1. The protein is Urease subunit beta of Rhodopseudomonas palustris (strain ATCC BAA-98 / CGA009).